Here is a 412-residue protein sequence, read N- to C-terminus: Tyrosine--tRNA ligase (412 aa).

Position 31 (Y31) interacts with L-tyrosine. The 'HIGH' region signature appears at 36–45; the sequence is PTAPSLHIGH. Positions 162 and 166 each coordinate L-tyrosine. The 'KMSKS' region signature appears at 222 to 226; the sequence is KIGKT. K225 contacts ATP. The region spanning 345-411 is the S4 RNA-binding domain; sequence KRWLDIVVEL…GKRKKQVIDL (67 aa).

It belongs to the class-I aminoacyl-tRNA synthetase family. TyrS type 1 subfamily. As to quaternary structure, homodimer.

It is found in the cytoplasm. The enzyme catalyses tRNA(Tyr) + L-tyrosine + ATP = L-tyrosyl-tRNA(Tyr) + AMP + diphosphate + H(+). Catalyzes the attachment of tyrosine to tRNA(Tyr) in a two-step reaction: tyrosine is first activated by ATP to form Tyr-AMP and then transferred to the acceptor end of tRNA(Tyr). This chain is Tyrosine--tRNA ligase, found in Chlamydia trachomatis serovar L2 (strain ATCC VR-902B / DSM 19102 / 434/Bu).